Here is a 305-residue protein sequence, read N- to C-terminus: Elongation factor Ts (305 aa).

The interval 81-84 is involved in Mg(2+) ion dislocation from EF-Tu; it reads TDFV.

Belongs to the EF-Ts family.

It is found in the cytoplasm. Its function is as follows. Associates with the EF-Tu.GDP complex and induces the exchange of GDP to GTP. It remains bound to the aminoacyl-tRNA.EF-Tu.GTP complex up to the GTP hydrolysis stage on the ribosome. The sequence is that of Elongation factor Ts from Nitratiruptor sp. (strain SB155-2).